A 134-amino-acid polypeptide reads, in one-letter code: Small ribosomal subunit protein uS8c (134 aa).

The protein belongs to the universal ribosomal protein uS8 family. In terms of assembly, part of the 30S ribosomal subunit.

Its subcellular location is the plastid. Functionally, one of the primary rRNA binding proteins, it binds directly to 16S rRNA central domain where it helps coordinate assembly of the platform of the 30S subunit. The polypeptide is Small ribosomal subunit protein uS8c (rps8) (Cuscuta obtusiflora (Peruvian dodder)).